The chain runs to 932 residues: DNA mismatch repair protein MutS (932 aa).

Position 615 to 622 (615 to 622 (GPNMAGKS)) interacts with ATP.

It belongs to the DNA mismatch repair MutS family.

This protein is involved in the repair of mismatches in DNA. It is possible that it carries out the mismatch recognition step. This protein has a weak ATPase activity. The polypeptide is DNA mismatch repair protein MutS (Clostridium botulinum (strain 657 / Type Ba4)).